A 130-amino-acid polypeptide reads, in one-letter code: Small ribosomal subunit protein uS8y (130 aa).

It belongs to the universal ribosomal protein uS8 family.

This chain is Small ribosomal subunit protein uS8y (RPS15AC), found in Arabidopsis thaliana (Mouse-ear cress).